The sequence spans 767 residues: MSAEPSVQTTSSSGPTELRSAPSYAGSWTKLTPPLTPWVVSLLSDLGFGQMTPVQASTIPLFVSHKDVVVEAVTGSGKTLAFVIPVLEMLARRTTRLKKDEVGALIVSPTRELAEQIYKVLVMFLDAQNHAHVQAQQQQDQDEQDEQDEQEAQSDSDTDPDASTALNNKRKSSNHLVARKNMISGAQLVVGGSKCTPLDDYRQLRDSGADILVGTPGRLEELLSKKGVKKSSLEVLVLDEADRLLDLGFTENLRRILSLLPKQRRTGLFSATMTDALSELVRIGLRNPVRVVVKVEAKHKTSSSIDDSRRTPATLQNLYQLCRAQNKLAQLARIVLFESSQNAISGGARKLIVYFSTCAQVNYFYSVFSQVSILRQHRVKLYALHGKQTPSKRKSMFDTFVASTALDSGASGASVLFCTDVAARGLDLPDVDVVVQYDPPTDPKVFSHRCGRTARAGRNGRAIVMLHTGREQDFVSYMRVKRIPLSPYPYLSSTLHGILEPAEDDASAHDLELSIRDLAKTDREIFELSIRAYVSYVRAYTKHEMSYIFRINELDLAGVARAFALIRLPSMPELKSRQSAGTLIYNQEPIDFSSIPFKDKAKQRIRLAKLSGDQAKPPARIKASVDDAAQLQDDQCDSHDSDDAHPNSSATRAKNKRKLEREKGAWSAQKERKQARLANREKRARKRTFLKTQAAESSSNAKHEPPQDDHDEHDWNDDYRKLQKDKRQQRQRNKADRANSDNDDAMHFNSDSDAAAANADAEPFFVI.

A Q motif motif is present at residues 28-56; sequence WTKLTPPLTPWVVSLLSDLGFGQMTPVQA. The 233-residue stretch at 59–291 folds into the Helicase ATP-binding domain; sequence IPLFVSHKDV…RIGLRNPVRV (233 aa). 72 to 79 is an ATP binding site; sequence AVTGSGKT. Residues 132–176 are disordered; sequence HVQAQQQQDQDEQDEQDEQEAQSDSDTDPDASTALNNKRKSSNHL. The span at 140-160 shows a compositional bias: acidic residues; sequence DQDEQDEQDEQEAQSDSDTDP. A DEAD box motif is present at residues 239–242; sequence DEAD. The region spanning 330–507 is the Helicase C-terminal domain; it reads QLARIVLFES…ILEPAEDDAS (178 aa). Residues 609 to 767 form a disordered region; the sequence is KLSGDQAKPP…NADAEPFFVI (159 aa). Basic and acidic residues-rich tracts occupy residues 636–645 and 659–681; these read CDSHDSDDAH and LERE…ANRE. A coiled-coil region spans residues 654-746; that stretch reads KNKRKLEREK…RANSDNDDAM (93 aa). Polar residues predominate over residues 690 to 700; the sequence is LKTQAAESSSN. Positions 701 to 746 are enriched in basic and acidic residues; the sequence is AKHEPPQDDHDEHDWNDDYRKLQKDKRQQRQRNKADRANSDNDDAM. A compositionally biased stretch (low complexity) spans 749–761; the sequence is NSDSDAAAANADA.

This sequence belongs to the DEAD box helicase family. DDX55/SPB4 subfamily. As to quaternary structure, component of pre-60S ribosomal complexes.

The protein resides in the nucleus. The protein localises to the nucleolus. It catalyses the reaction ATP + H2O = ADP + phosphate + H(+). Its function is as follows. ATP-binding RNA helicase involved in the biogenesis of 60S ribosomal subunits. Binds 90S pre-ribosomal particles and dissociates from pre-60S ribosomal particles after processing of 27SB pre-rRNA. Required for the normal formation of 18S rRNA through the processing of pre-rRNAs at sites A0, A1 and A2, and the normal formation of 25S and 5.8S rRNAs through the processing of pre-rRNAs at sites C1 and C2. This chain is ATP-dependent rRNA helicase SPB4, found in Mycosarcoma maydis (Corn smut fungus).